The sequence spans 294 residues: Melanocortin receptor 5 (294 aa).

The Extracellular segment spans residues 1 to 29; it reads FLDLQLNATEGNVSGPSVGNTSSPCEDMG. 3 N-linked (GlcNAc...) asparagine glycosylation sites follow: Asn7, Asn12, and Asn20. Residues 30-53 traverse the membrane as a helical segment; that stretch reads IEVEVFLTLGLISLLENILVIGAI. Residues 54-65 lie on the Cytoplasmic side of the membrane; the sequence is ARNKNLHVPMYF. Residues 66–89 form a helical membrane-spanning segment; it reads FVCSLAVADMLVSLSNSWETITIY. Topologically, residues 90-106 are extracellular; the sequence is LIANKHLVLSDTSVRHL. A helical membrane pass occupies residues 107–130; that stretch reads DNVFDSMICISLVASMCSLLAVAV. The Cytoplasmic portion of the chain corresponds to 131–147; that stretch reads DRYVTIFYALRYQHLMT. Residues 148-171 traverse the membrane as a helical segment; the sequence is GRRCGAIIAGIWALCTGCGPVFIV. The Extracellular portion of the chain corresponds to 172–178; it reads YYESTYV. The chain crosses the membrane as a helical span at residues 179-203; it reads VVCLVAMFLTMLLLMASLYAHMFLQ. Over 204–231 the chain is Cytoplasmic; that stretch reads ARAHVRRIAALPGYRSARQRTSMKGAVT. The helical transmembrane segment at 232–257 threads the bilayer; sequence LAMLLGVFIVCWAPFFLHLILMISCP. The Extracellular portion of the chain corresponds to 258-265; the sequence is QNLYCSCF. The chain crosses the membrane as a helical span at residues 266 to 289; sequence MSHFNMYLILIMCNSVIDPLIYAF. Residues 290-294 are Cytoplasmic-facing; it reads RSQEK.

This sequence belongs to the G-protein coupled receptor 1 family.

It is found in the cell membrane. Functionally, receptor for MSH (alpha, beta and gamma) and ACTH. The activity of this receptor is mediated by G proteins which activate adenylate cyclase. This receptor is a possible mediator of the immunomodulation properties of melanocortins. The protein is Melanocortin receptor 5 (MC5R) of Sus scrofa (Pig).